Here is a 199-residue protein sequence, read N- to C-terminus: NAD(P)H dehydrogenase (quinone) (199 aa).

The Flavodoxin-like domain maps to 4 to 190 (VLVLYYSTYG…EGARHQGELI (187 aa)). Residues 10–15 (STYGHV) and 78–80 (TRF) each bind FMN. Tyr12 lines the NAD(+) pocket. A substrate-binding site is contributed by Trp98. FMN is bound by residues 113 to 119 (STATQHG) and His134.

The protein belongs to the WrbA family. The cofactor is FMN.

It catalyses the reaction a quinone + NADH + H(+) = a quinol + NAD(+). The catalysed reaction is a quinone + NADPH + H(+) = a quinol + NADP(+). The chain is NAD(P)H dehydrogenase (quinone) from Cupriavidus metallidurans (strain ATCC 43123 / DSM 2839 / NBRC 102507 / CH34) (Ralstonia metallidurans).